The following is a 123-amino-acid chain: Protein Wnt-7b (123 aa).

The O-palmitoleoyl serine; by PORCN moiety is linked to residue S1. Residues V33–T61 are disordered linker. C89 and C104 are oxidised to a cystine. N-linked (GlcNAc...) asparagine glycosylation occurs at N90.

This sequence belongs to the Wnt family. Post-translationally, palmitoleoylation is required for efficient binding to frizzled receptors. Depalmitoleoylation leads to Wnt signaling pathway inhibition.

It is found in the secreted. The protein resides in the extracellular space. It localises to the extracellular matrix. Functionally, ligand for members of the frizzled family of seven transmembrane receptors that functions in the canonical Wnt/beta-catenin signaling pathway. Required for normal fusion of the chorion and the allantois during placenta development. Required for central nervous system (CNS) angiogenesis and blood-brain barrier regulation. The chain is Protein Wnt-7b (WNT7B) from Anser caerulescens (Snow goose).